Reading from the N-terminus, the 1138-residue chain is Ras guanine nucleotide exchange factor N (1138 aa).

3 LRR repeats span residues 1 to 16 (MSYNSLTTIDIDITQL), 18 to 39 (HLKSVNLRSNKLGNSSGVSYFG), and 43 to 64 (TLQKLNLKENYLTELPSTFYLL). 7 disordered regions span residues 126–180 (ALKN…SNNN), 239–301 (FNSE…GSRK), 319–360 (NKTH…SDTN), 389–411 (IDSPRTLERRNSSRDDIPISPPQ), 473–540 (GSPT…NNNN), 601–643 (ATTV…TSGS), and 660–680 (MSDVFSGGNSQGGGSSLSQSG). Over residues 140–158 (KTKGLHSSSSNINTSNNIT) the composition is skewed to low complexity. The segment covering 263–275 (RAQTISGKQPSII) has biased composition (polar residues). Positions 283 to 299 (SGGGSGNNNNSGGGGGS) are enriched in gly residues. The segment covering 326–352 (GHSSSSQSNSTTNTPSISSTPYPTSTI) has biased composition (low complexity). A compositionally biased stretch (basic and acidic residues) spans 393-405 (RTLERRNSSRDDI). Positions 487-496 (PQHPPPPPPI) are enriched in pro residues. Residues 498–511 (DNNQPKLNQSQNLI) are compositionally biased toward polar residues. Composition is skewed to low complexity over residues 512-540 (NTNSNSVTTTNNSSQTTTTTTTTTTNNNN) and 605-634 (NSNSSNNLMMSNSPLSSSSMNLLQQSNSPQ). Residues 733 to 855 (GVPKVKNITL…LLLNIINMKR (123 aa)) form the N-terminal Ras-GEF domain. One can recognise a Ras-GEF domain in the interval 891–1118 (RPHEIARQLT…YSEASKIEEK (228 aa)).

Functionally, promotes the exchange of Ras-bound GDP by GTP. May play a role in chemotaxis. This is Ras guanine nucleotide exchange factor N (gefN) from Dictyostelium discoideum (Social amoeba).